The primary structure comprises 362 residues: Salactin (362 aa).

The segment covering M1 to G10 has biased composition (acidic residues). Residues M1 to V28 are disordered.

Forms dynamically unstable filaments. Monomers are added at the growing filament end. In vitro, salactin polymerizes in the presence of ATP and AMP-PNP but not in the presence of ADP, GTP, ATPgammaS or buffer alone.

The protein localises to the cytoplasm. In terms of biological role, actin homolog which might be involved in partitioning DNA between daughter cells when chromosomal copy number is low. The chain is Salactin from Halobacterium salinarum (strain ATCC 700922 / JCM 11081 / NRC-1) (Halobacterium halobium).